We begin with the raw amino-acid sequence, 387 residues long: Acyltransferase MdmB (387 aa).

10 consecutive transmembrane segments (helical) span residues 8–28 (LPSL…CHIA), 45–65 (ITTL…FVLA), 85–105 (IYPL…SLAE), 139–161 (TPSW…YRLV), 170–190 (WWCA…TSQF), 209–229 (CWLP…ALIL), 236–256 (GPGV…TQVV), 258–278 (PMFT…TALA), 292–312 (AVLV…FMVI), and 336–356 (ALAL…HTVV).

This sequence belongs to the acyltransferase 3 family.

Its subcellular location is the cell membrane. Its function is as follows. Catalyzes the acylation of the mycaminose sugar during midecamycin biosynthesis. This Streptomyces mycarofaciens protein is Acyltransferase MdmB (mdmB).